We begin with the raw amino-acid sequence, 212 residues long: Peptide methionine sulfoxide reductase MsrA (212 aa).

Cys-52 is a catalytic residue.

It belongs to the MsrA Met sulfoxide reductase family.

It catalyses the reaction L-methionyl-[protein] + [thioredoxin]-disulfide + H2O = L-methionyl-(S)-S-oxide-[protein] + [thioredoxin]-dithiol. The catalysed reaction is [thioredoxin]-disulfide + L-methionine + H2O = L-methionine (S)-S-oxide + [thioredoxin]-dithiol. Functionally, has an important function as a repair enzyme for proteins that have been inactivated by oxidation. Catalyzes the reversible oxidation-reduction of methionine sulfoxide in proteins to methionine. In Salmonella choleraesuis (strain SC-B67), this protein is Peptide methionine sulfoxide reductase MsrA.